A 238-amino-acid chain; its full sequence is MNEPKYKRVMLKLSGEALSGEKGFGFDFDFTKEISEQIKKLVDMGIEVGAVVGGGNIWRGRSGSEMDRTTADYMGMLATCINALALQDSLEQLGVNTRVQTAIEMKEIAEPFIRRRAMRHLEKERVVIFASGTGNPYFSTDTAAALRAAEIEADVILLAKKVDGVYDKDPHKYDDAKKYNKLSYIEVLDQGLQVMDSTATSLCMDNDIPILVFGLDEPCNIIKAVTGEEIGTLVSNSK.

12–15 (KLSG) is a binding site for ATP. The tract at residues 20-25 (GEKGFG) is involved in allosteric activation by GTP. Gly54 serves as a coordination point for UMP. The ATP site is built by Gly55 and Arg59. UMP contacts are provided by residues Asp72 and 133-140 (TGNPYFST). ATP-binding residues include Tyr166 and Asp169.

The protein belongs to the UMP kinase family. In terms of assembly, homohexamer.

Its subcellular location is the cytoplasm. It carries out the reaction UMP + ATP = UDP + ADP. It functions in the pathway pyrimidine metabolism; CTP biosynthesis via de novo pathway; UDP from UMP (UMPK route): step 1/1. Allosterically activated by GTP. Inhibited by UTP. Functionally, catalyzes the reversible phosphorylation of UMP to UDP. This Clostridium botulinum (strain Langeland / NCTC 10281 / Type F) protein is Uridylate kinase.